The sequence spans 61 residues: Small ribosomal subunit protein uS14 (61 aa).

Residues cysteine 24, cysteine 27, cysteine 40, and cysteine 43 each coordinate Zn(2+).

Belongs to the universal ribosomal protein uS14 family. Zinc-binding uS14 subfamily. Part of the 30S ribosomal subunit. Contacts proteins S3 and S10. It depends on Zn(2+) as a cofactor.

Its function is as follows. Binds 16S rRNA, required for the assembly of 30S particles and may also be responsible for determining the conformation of the 16S rRNA at the A site. This Geobacter sp. (strain M21) protein is Small ribosomal subunit protein uS14.